A 37-amino-acid polypeptide reads, in one-letter code: Omega-conotoxin-like S6.7 (37 aa).

A propeptide spanning residues 1 to 4 is cleaved from the precursor; the sequence is KSTS. 3 cysteine pairs are disulfide-bonded: cysteine 5-cysteine 20, cysteine 12-cysteine 23, and cysteine 19-cysteine 32.

This sequence belongs to the conotoxin O1 superfamily. In terms of tissue distribution, expressed by the venom duct.

The protein localises to the secreted. In terms of biological role, omega-conotoxins act at presynaptic membranes, they bind and block voltage-gated calcium channels (Cav). This toxin blocks N-, P- and Q-type calcium channels. In Conus striatus (Striated cone), this protein is Omega-conotoxin-like S6.7.